Consider the following 66-residue polypeptide: Photosystem II reaction center protein J (66 aa).

Residues 36–56 (LWLVATAGGIAVIFVLGIFFY) form a helical membrane-spanning segment.

This sequence belongs to the PsbJ family. As to quaternary structure, PSII is composed of 1 copy each of membrane proteins PsbA, PsbB, PsbC, PsbD, PsbE, PsbF, PsbH, PsbI, PsbJ, PsbK, PsbL, PsbM, PsbT, PsbX, PsbY, Psb30/Ycf12, peripheral proteins PsbO, CyanoQ (PsbQ), PsbU, PsbV and a large number of cofactors. It forms dimeric complexes.

The protein localises to the cellular thylakoid membrane. In terms of biological role, one of the components of the core complex of photosystem II (PSII). PSII is a light-driven water:plastoquinone oxidoreductase that uses light energy to abstract electrons from H(2)O, generating O(2) and a proton gradient subsequently used for ATP formation. It consists of a core antenna complex that captures photons, and an electron transfer chain that converts photonic excitation into a charge separation. This is Photosystem II reaction center protein J from Prochlorococcus marinus (strain MIT 9215).